A 65-amino-acid polypeptide reads, in one-letter code: MPNPDNRSDNAEKLQEMVQNTIDNFNEAKETAELSNEKDRSAIEAKNQRRLESIDSLKSEIKDES.

It belongs to the Tlp family.

It localises to the spore core. This Bacillus anthracis (strain A0248) protein is Small, acid-soluble spore protein Tlp.